We begin with the raw amino-acid sequence, 48 residues long: ATP synthase protein 8 (48 aa).

A helical membrane pass occupies residues 4 to 24 (LVPFFFVNQVVFAFIVLTVLI).

Belongs to the ATPase protein 8 family. In terms of assembly, F-type ATPases have 2 components, CF(1) - the catalytic core - and CF(0) - the membrane proton channel.

The protein resides in the mitochondrion membrane. Mitochondrial membrane ATP synthase (F(1)F(0) ATP synthase or Complex V) produces ATP from ADP in the presence of a proton gradient across the membrane which is generated by electron transport complexes of the respiratory chain. F-type ATPases consist of two structural domains, F(1) - containing the extramembraneous catalytic core and F(0) - containing the membrane proton channel, linked together by a central stalk and a peripheral stalk. During catalysis, ATP synthesis in the catalytic domain of F(1) is coupled via a rotary mechanism of the central stalk subunits to proton translocation. Part of the complex F(0) domain. Minor subunit located with subunit a in the membrane. The protein is ATP synthase protein 8 (atp8) of Emericella nidulans (Aspergillus nidulans).